Here is a 261-residue protein sequence, read N- to C-terminus: tRNA pseudouridine synthase A (261 aa).

Aspartate 51 acts as the Nucleophile in catalysis. Tyrosine 109 serves as a coordination point for substrate.

It belongs to the tRNA pseudouridine synthase TruA family. Homodimer.

It catalyses the reaction uridine(38/39/40) in tRNA = pseudouridine(38/39/40) in tRNA. In terms of biological role, formation of pseudouridine at positions 38, 39 and 40 in the anticodon stem and loop of transfer RNAs. In Haemophilus ducreyi (strain 35000HP / ATCC 700724), this protein is tRNA pseudouridine synthase A.